The primary structure comprises 621 residues: Probable bifunctional dTTP/UTP pyrophosphatase/methyltransferase protein (621 aa).

Positions 11-223 (LHKRVVLASA…PPRPEDLRRS (213 aa)) are MAF-like. The residue at position 21 (Ser-21) is a Phosphoserine. Catalysis depends on Asp-88, which acts as the Proton acceptor; for pyrophosphatase activity. Ser-228 carries the phosphoserine modification. Thr-234 carries the post-translational modification Phosphothreonine. The disordered stretch occupies residues 235-279 (FEDLSDVEGGGSEPTQRDAGSRDEKAEAGEAGQATAEAECHRTRE). Position 239 is a phosphoserine (Ser-239). A compositionally biased stretch (basic and acidic residues) spans 249 to 262 (TQRDAGSRDEKAEA). The tract at residues 277 to 621 (TRETLPPFPT…DAILATKVAP (345 aa)) is ASMT-like. The residue at position 421 (Ser-421) is a Phosphoserine. Residues Asp-482, 508–510 (GDF), and Arg-525 each bind S-adenosyl-L-methionine.

This sequence in the N-terminal section; belongs to the Maf family. YhdE subfamily. The protein in the C-terminal section; belongs to the class I-like SAM-binding methyltransferase superfamily. Cation-independent O-methyltransferase family. In terms of assembly, homodimer. Requires a divalent metal cation as cofactor. In terms of tissue distribution, widely expressed. In adult, highly expressed in pancreas, placenta, fibroblast, thymus, prostate, testis, ovary and colon. Expressed at lower levels in spleen, small intestine and leukocytes. In fetus, expressed at high levels in the lung and kidney and at lower level in brain and liver.

The catalysed reaction is dTTP + H2O = dTMP + diphosphate + H(+). It catalyses the reaction UTP + H2O = UMP + diphosphate + H(+). The enzyme catalyses CTP + H2O = CMP + diphosphate + H(+). It carries out the reaction psi-UTP + H2O = psi-UMP + diphosphate + H(+). The catalysed reaction is 5-methyl-UTP + H2O = 5-methyl-UMP + diphosphate + H(+). It catalyses the reaction 5-methyl-CTP + H2O = 5-methyl-CMP + diphosphate + H(+). In terms of biological role, nucleoside triphosphate pyrophosphatase that hydrolyzes dTTP and UTP. Can also hydrolyze CTP and the modified nucleotides pseudo-UTP, 5-methyl-UTP (m(5)UTP) and 5-methyl-CTP (m(5)CTP). Has weak activity with dCTP, 8-oxo-GTP and N(4)-methyl-dCTP. May have a dual role in cell division arrest and in preventing the incorporation of modified nucleotides into cellular nucleic acids. In addition, the presence of the putative catalytic domain of S-adenosyl-L-methionine binding in the C-terminal region argues for a methyltransferase activity. This chain is Probable bifunctional dTTP/UTP pyrophosphatase/methyltransferase protein (ASMTL), found in Homo sapiens (Human).